We begin with the raw amino-acid sequence, 64 residues long: Cytochrome c oxidase subunit 2 (64 aa).

The Mitochondrial intermembrane segment spans residues 1-14; that stretch reads MAHPSQLGFQDAAS. The helical transmembrane segment at 15–45 threads the bilayer; the sequence is PVMEELXHFHDHTLMIVFLISTLVXYIIVAM. Topologically, residues 46–64 are mitochondrial matrix; it reads VSTKLTNKYVLDSQEIEIV.

It belongs to the cytochrome c oxidase subunit 2 family. As to quaternary structure, component of the cytochrome c oxidase (complex IV, CIV), a multisubunit enzyme composed of 14 subunits. The complex is composed of a catalytic core of 3 subunits MT-CO1, MT-CO2 and MT-CO3, encoded in the mitochondrial DNA, and 11 supernumerary subunits COX4I, COX5A, COX5B, COX6A, COX6B, COX6C, COX7A, COX7B, COX7C, COX8 and NDUFA4, which are encoded in the nuclear genome. The complex exists as a monomer or a dimer and forms supercomplexes (SCs) in the inner mitochondrial membrane with NADH-ubiquinone oxidoreductase (complex I, CI) and ubiquinol-cytochrome c oxidoreductase (cytochrome b-c1 complex, complex III, CIII), resulting in different assemblies (supercomplex SCI(1)III(2)IV(1) and megacomplex MCI(2)III(2)IV(2)). Found in a complex with TMEM177, COA6, COX18, COX20, SCO1 and SCO2. Interacts with TMEM177 in a COX20-dependent manner. Interacts with COX20. Interacts with COX16. The cofactor is Cu cation.

It localises to the mitochondrion inner membrane. It catalyses the reaction 4 Fe(II)-[cytochrome c] + O2 + 8 H(+)(in) = 4 Fe(III)-[cytochrome c] + 2 H2O + 4 H(+)(out). Functionally, component of the cytochrome c oxidase, the last enzyme in the mitochondrial electron transport chain which drives oxidative phosphorylation. The respiratory chain contains 3 multisubunit complexes succinate dehydrogenase (complex II, CII), ubiquinol-cytochrome c oxidoreductase (cytochrome b-c1 complex, complex III, CIII) and cytochrome c oxidase (complex IV, CIV), that cooperate to transfer electrons derived from NADH and succinate to molecular oxygen, creating an electrochemical gradient over the inner membrane that drives transmembrane transport and the ATP synthase. Cytochrome c oxidase is the component of the respiratory chain that catalyzes the reduction of oxygen to water. Electrons originating from reduced cytochrome c in the intermembrane space (IMS) are transferred via the dinuclear copper A center (CU(A)) of subunit 2 and heme A of subunit 1 to the active site in subunit 1, a binuclear center (BNC) formed by heme A3 and copper B (CU(B)). The BNC reduces molecular oxygen to 2 water molecules using 4 electrons from cytochrome c in the IMS and 4 protons from the mitochondrial matrix. The protein is Cytochrome c oxidase subunit 2 (mt-co2) of Scaphirhynchus platorynchus (Shovelnose sturgeon).